The following is a 626-amino-acid chain: UvrABC system protein C (626 aa).

Positions 25–104 (TSPGVYRFSN…IKELKPRYNV (80 aa)) constitute a GIY-YIG domain. One can recognise a UVR domain in the interval 218 to 253 (SALLRDLSAEMQKKAKELKFEEAAALKAQIEGLKRY).

It belongs to the UvrC family. As to quaternary structure, interacts with UvrB in an incision complex.

Its subcellular location is the cytoplasm. Functionally, the UvrABC repair system catalyzes the recognition and processing of DNA lesions. UvrC both incises the 5' and 3' sides of the lesion. The N-terminal half is responsible for the 3' incision and the C-terminal half is responsible for the 5' incision. This Chlorobaculum tepidum (strain ATCC 49652 / DSM 12025 / NBRC 103806 / TLS) (Chlorobium tepidum) protein is UvrABC system protein C.